We begin with the raw amino-acid sequence, 555 residues long: Potassium-transporting ATPase potassium-binding subunit (555 aa).

10 helical membrane-spanning segments follow: residues 2 to 22, 60 to 80, 130 to 150, 173 to 193, 246 to 266, 278 to 298, 374 to 394, 412 to 432, 483 to 503, and 525 to 545; these read IWVAVVITMLLFILVAKPTGI, QYALSLVLLNGFMIVVVYFIF, IGITFLMFAAPATTLAIVMAF, VFLPIAFIAALVFVALGVPQT, MSNILQMMLMMLLPTALPFTY, ILFVSLFMVFLLGFITITTSE, AGFVNIIMYAIIAVFISGLMV, LIAVTILFHPLLILGFSALAL, LVMFLGRYFSLITMLAVAASL, and GIFIGTIVIVGALTFFPMLVL.

This sequence belongs to the KdpA family. As to quaternary structure, the system is composed of three essential subunits: KdpA, KdpB and KdpC.

The protein localises to the cell membrane. Part of the high-affinity ATP-driven potassium transport (or Kdp) system, which catalyzes the hydrolysis of ATP coupled with the electrogenic transport of potassium into the cytoplasm. This subunit binds the extracellular potassium ions and delivers the ions to the membrane domain of KdpB through an intramembrane tunnel. This chain is Potassium-transporting ATPase potassium-binding subunit, found in Bacillus mycoides (strain KBAB4) (Bacillus weihenstephanensis).